The following is a 291-amino-acid chain: MTERDFDTPVETPTVQPAPAQGAKPAQTVPVVAVVLAAGFGTRFDPDNPKQLVSVGGKPIVCWSIDAFEHCDRVSDIVVVVNPKVRGEVETLVGEMGYTKVRVIIDGGDERVDSTATALDMLATAGIPDDAKILIHDAVRPFVEQSAIDGSIDALDQFTAATVAYASTDTVLLTEDLGDLKVVKSVPDRPNTFRAQTPQSFRFATIRHAYDLAAADPDFHPTDDTRVVVDYLPDEPVAIVSGAETNLKITTLEDIPTAERIAEEILGRDPKEEARARMHALLAQAAGQMHR.

The disordered stretch occupies residues 1–23; it reads MTERDFDTPVETPTVQPAPAQGA.

This sequence belongs to the IspD/TarI cytidylyltransferase family. IspD subfamily.

It catalyses the reaction 2-C-methyl-D-erythritol 4-phosphate + CTP + H(+) = 4-CDP-2-C-methyl-D-erythritol + diphosphate. It functions in the pathway isoprenoid biosynthesis; isopentenyl diphosphate biosynthesis via DXP pathway; isopentenyl diphosphate from 1-deoxy-D-xylulose 5-phosphate: step 2/6. Functionally, catalyzes the formation of 4-diphosphocytidyl-2-C-methyl-D-erythritol from CTP and 2-C-methyl-D-erythritol 4-phosphate (MEP). The protein is 2-C-methyl-D-erythritol 4-phosphate cytidylyltransferase of Bifidobacterium longum (strain NCC 2705).